Consider the following 232-residue polypeptide: ATP-dependent Clp protease proteolytic subunit 2 (232 aa).

The active-site Nucleophile is the Ser124. The active site involves His149.

This sequence belongs to the peptidase S14 family. Fourteen ClpP subunits assemble into 2 heptameric rings which stack back to back to give a disk-like structure with a central cavity, resembling the structure of eukaryotic proteasomes.

Its subcellular location is the cytoplasm. The catalysed reaction is Hydrolysis of proteins to small peptides in the presence of ATP and magnesium. alpha-casein is the usual test substrate. In the absence of ATP, only oligopeptides shorter than five residues are hydrolyzed (such as succinyl-Leu-Tyr-|-NHMec, and Leu-Tyr-Leu-|-Tyr-Trp, in which cleavage of the -Tyr-|-Leu- and -Tyr-|-Trp bonds also occurs).. In terms of biological role, cleaves peptides in various proteins in a process that requires ATP hydrolysis. Has a chymotrypsin-like activity. Plays a major role in the degradation of misfolded proteins. The protein is ATP-dependent Clp protease proteolytic subunit 2 of Nostoc sp. (strain PCC 7120 / SAG 25.82 / UTEX 2576).